Here is a 991-residue protein sequence, read N- to C-terminus: Transcription factor ROB1 (991 aa).

The segment at residues Cys-17 to Cys-43 is a DNA-binding region (zn(2)-C6 fungal-type). Disordered regions lie at residues Leu-150 to Ala-188, Phe-792 to Pro-875, and Gln-901 to Pro-959. Positions Gln-152–Ser-168 are enriched in low complexity. Residues Ala-169–Leu-187 are compositionally biased toward polar residues. The span at Gln-795 to Gln-806 shows a compositional bias: low complexity. Composition is skewed to basic and acidic residues over residues Pro-807–Glu-817 and Gln-825–Lys-855. A compositionally biased stretch (low complexity) spans Gln-907–Gln-931.

Its subcellular location is the nucleus. Functionally, transcription factor that mediates conventional biofilm formation and plays a key role in microcolony formation under both flow and static conditions and to epithelial surfaces. Modulates infection of mammalian hosts. The chain is Transcription factor ROB1 from Candida albicans (strain SC5314 / ATCC MYA-2876) (Yeast).